Reading from the N-terminus, the 327-residue chain is Gamma-resorcylate decarboxylase (327 aa).

Zn(2+)-binding residues include Glu-8, His-10, His-164, and Asp-287. Asp-287 is an active-site residue.

This sequence belongs to the metallo-dependent hydrolases superfamily. ACMSD family. Homotetramer. Requires Zn(2+) as cofactor.

It catalyses the reaction 2,6-dihydroxybenzoate + H(+) = resorcinol + CO2. The enzyme catalyses 2,3-dihydroxybenzoate + H(+) = catechol + CO2. The protein operates within aromatic compound metabolism. Its activity is regulated as follows. Insensitive to oxygen. Decarboxylation and carboxylation are inhibited by AgNO(3) and by diethyl pyrocarbonate, a histidine residue-specific inhibitor. Decarboxylation is also inhibited by HgCl(2) and activated by MgCl(2). Involved in the gamma-resorcylate (2,6-dihydroxybenzoate) catabolism. Catalyzes the reversible decarboxylation of gamma-resorcylate to resorcinol. Also catalyzes the decarboxylation of 2,3-dihydroxybenzoate to catechol, but does not act on 2-hydroxybenzoic acid 3-hydroxybenzoic acid, 4-hydroxybenzoic acid, 3,4-dihydroxybenzoic acid, 2,5-dihydroxybenzoic acid, 2,3,4-trihydroxybenzoic acid, 3,4,5-trihydroxybenzoic acid, 4-aminobenzoic acid, o-hydroxyphenylacetic acid and vanillic acid. Resorcinol and catechol can both be carboxylated by the reverse reaction. In Rhizobium radiobacter (Agrobacterium tumefaciens), this protein is Gamma-resorcylate decarboxylase.